The sequence spans 469 residues: MAQFLTEDFLLDTEFARRLYHDYAKDQPIYDYHCHLPPEQIAENTRFKNLYDIWLKGDHYKWRAMRTNGVAERFCTGDASDREKFDAWAATVPHTIGNPLYHWTHLELRRPFGITGKLLSPATADEIWQRGNELLAQDSFSARGIMQKMNVKMVGTTDDPIDDLRHHKAIAADGSFNIKVLPSWRPDKAFNIEAAGFNDYMQRLEAAADTSISRFADLCTALNKRMDHFAAHGCKVSDHALDVVVYGEADEATLDGILARRLAGNQPSTEETAQFKTAVLLFLSGEYHRREWVQQYHIGALRNNNSRMFNLVGPDIGFDSINDQPLAQPLSRLLDAQGLRNALPKTILYCLNPRDNEVIGTMVGNFQGEGAAGKMQFGSGWWFNDQKDGMQRQMTQLAQLGLLSRFVGMLTDSRSFLSYTRHEYFRRILCQMIGRWVEDGEAPADIELLGSMVKNICFDNAKQYFAIEL.

The protein belongs to the metallo-dependent hydrolases superfamily. Uronate isomerase family.

The enzyme catalyses D-glucuronate = D-fructuronate. The catalysed reaction is aldehydo-D-galacturonate = keto-D-tagaturonate. It participates in carbohydrate metabolism; pentose and glucuronate interconversion. This chain is Uronate isomerase, found in Yersinia enterocolitica serotype O:8 / biotype 1B (strain NCTC 13174 / 8081).